The chain runs to 127 residues: Large ribosomal subunit protein eL8 (127 aa).

This sequence belongs to the eukaryotic ribosomal protein eL8 family. Part of the 50S ribosomal subunit. Probably part of the RNase P complex.

It is found in the cytoplasm. Functionally, multifunctional RNA-binding protein that recognizes the K-turn motif in ribosomal RNA, the RNA component of RNase P, box H/ACA, box C/D and box C'/D' sRNAs. This chain is Large ribosomal subunit protein eL8, found in Hyperthermus butylicus (strain DSM 5456 / JCM 9403 / PLM1-5).